A 132-amino-acid chain; its full sequence is Agouti-signaling protein (132 aa).

The first 22 residues, 1–22, serve as a signal peptide directing secretion; sequence MDVTRLLLATLLVFLCFFTAYS. N-linked (GlcNAc...) asparagine glycosylation is present at Asn-39. Residues 61–87 are disordered; the sequence is QISRKEAEKKRSSKKEASMKKVARPRT. A compositionally biased stretch (basic and acidic residues) spans 63-79; sequence SRKEAEKKRSSKKEASM. 5 disulfide bridges follow: Cys-93–Cys-108, Cys-100–Cys-114, Cys-107–Cys-125, Cys-111–Cys-132, and Cys-116–Cys-123. The Agouti domain occupies 93–132; that stretch reads CVATRDSCKPPAPACCDPCASCQCRFFRSACSCRVLSLNC.

The protein resides in the secreted. Functionally, involved in the regulation of melanogenesis. The binding of ASP to MC1R precludes alpha-MSH initiated signaling and thus blocks production of cAMP, leading to a down-regulation of eumelanogenesis (brown/black pigment) and thus increasing synthesis of pheomelanin (yellow/red pigment). This is Agouti-signaling protein (ASIP) from Macaca maura (Moor macaque).